Consider the following 125-residue polypeptide: Ribosome-binding factor A (125 aa).

It belongs to the RbfA family. In terms of assembly, monomer. Binds 30S ribosomal subunits, but not 50S ribosomal subunits or 70S ribosomes.

The protein resides in the cytoplasm. Functionally, one of several proteins that assist in the late maturation steps of the functional core of the 30S ribosomal subunit. Associates with free 30S ribosomal subunits (but not with 30S subunits that are part of 70S ribosomes or polysomes). Required for efficient processing of 16S rRNA. May interact with the 5'-terminal helix region of 16S rRNA. This Akkermansia muciniphila (strain ATCC BAA-835 / DSM 22959 / JCM 33894 / BCRC 81048 / CCUG 64013 / CIP 107961 / Muc) protein is Ribosome-binding factor A.